A 377-amino-acid polypeptide reads, in one-letter code: MLEDPVNEVKRREHALRIIGEKMKKHGRDGIYDLTGLSGGFPLEEEDLDLIETYVGPAIFEEKLQEAGREHMGGEMIAAFNRTSSAILAAVLALTEPGSTVFHYLPELPSHPSVPGSTELASAGYQETEDFTEKPPADTSLVVVTGSTMDHRVVGESDLVRVIEIAHDAGIPVLVDDASGARLRTVLYGQRRACDLGADLAVTSTDKLMHGPRGGLMAGRAELIERVKSKAYQFGLEAQPPLVAAMVRALEEFEPSEIRDAIKRKEEFLRDFRGPEVEETPTGFIIKSSSLEDLQGSGYDGDEISTALSMILLSEHGIVTIPAVGMPGASKTLRFDLAARDAGRIEISFLREAIYDAIKLVSGFINDDEKMRRLILG.

Residue Lys-207 is modified to N6-(pyridoxal phosphate)lysine.

The protein belongs to the UPF0425 family. The cofactor is pyridoxal 5'-phosphate.

The chain is UPF0425 pyridoxal phosphate-dependent protein MTH_1914 from Methanothermobacter thermautotrophicus (strain ATCC 29096 / DSM 1053 / JCM 10044 / NBRC 100330 / Delta H) (Methanobacterium thermoautotrophicum).